Consider the following 347-residue polypeptide: MIVLGVESSCDETGVGLVSEGVLLGDALASSMDAHARFGGVVPEVAARAHLEAIVPVMHEALGKAGLDLADVDAVAVTAGPGLSTAVQVGLASAKALAFALGKPLYGVHHLAGHAAVDVLEHGPLPRRCVALVVSGGHTSLLLLGDLARDPIVHLGDTIDDAAGEAFDKVARVLGLGYPGGPSIDRAARDGDPRAIAFPRALSRAQDPAYGFSFSGVKTAVARWVEARQDAGGEVPVADVAASFQEAVADVLTRKAVAACREHGVDALLLVGGVAANTRVRALAEQRCAAAGLELRVPPIRLCTDNGAMIAAVGDLLVRAGAPASGLDLGADPSAPLTGALLAGPWS.

2 residues coordinate Fe cation: His110 and His114. Substrate-binding positions include 133 to 137 (VVSGG), Asp168, Gly181, Asp185, and Asn277. Residue Asp305 coordinates Fe cation.

Belongs to the KAE1 / TsaD family. It depends on Fe(2+) as a cofactor.

It is found in the cytoplasm. The enzyme catalyses L-threonylcarbamoyladenylate + adenosine(37) in tRNA = N(6)-L-threonylcarbamoyladenosine(37) in tRNA + AMP + H(+). In terms of biological role, required for the formation of a threonylcarbamoyl group on adenosine at position 37 (t(6)A37) in tRNAs that read codons beginning with adenine. Is involved in the transfer of the threonylcarbamoyl moiety of threonylcarbamoyl-AMP (TC-AMP) to the N6 group of A37, together with TsaE and TsaB. TsaD likely plays a direct catalytic role in this reaction. The sequence is that of tRNA N6-adenosine threonylcarbamoyltransferase from Kineococcus radiotolerans (strain ATCC BAA-149 / DSM 14245 / SRS30216).